The sequence spans 260 residues: Adenosylcobinamide-GDP ribazoletransferase (260 aa).

A run of 8 helical transmembrane segments spans residues 3–23, 36–56, 60–80, 108–128, 133–153, 180–200, 206–226, and 239–259; these read APLW…LPAW, FAPW…LVLI, WPTS…SGGL, VGAS…ASLL, LAPL…LWAM, ALPA…LMIV, MVLM…PELL, and GASV…LLPA.

Belongs to the CobS family. Mg(2+) is required as a cofactor.

It is found in the cell inner membrane. The catalysed reaction is alpha-ribazole + adenosylcob(III)inamide-GDP = adenosylcob(III)alamin + GMP + H(+). The enzyme catalyses alpha-ribazole 5'-phosphate + adenosylcob(III)inamide-GDP = adenosylcob(III)alamin 5'-phosphate + GMP + H(+). It functions in the pathway cofactor biosynthesis; adenosylcobalamin biosynthesis; adenosylcobalamin from cob(II)yrinate a,c-diamide: step 7/7. Joins adenosylcobinamide-GDP and alpha-ribazole to generate adenosylcobalamin (Ado-cobalamin). Also synthesizes adenosylcobalamin 5'-phosphate from adenosylcobinamide-GDP and alpha-ribazole 5'-phosphate. In Prochlorococcus marinus (strain MIT 9313), this protein is Adenosylcobinamide-GDP ribazoletransferase.